Reading from the N-terminus, the 396-residue chain is Probable sugar efflux transporter (396 aa).

Transmembrane regions (helical) follow at residues 15-35, 50-70, 81-101, 103-123, 136-156, 170-190, 209-229, 246-266, 275-295, 299-319, 333-353, and 364-384; these read VVTL…PVGL, VGIM…PFML, LICL…SWSF, VLVI…SITA, AQAL…GLPL, FFAI…LLPL, PALM…YTAY, FATA…VIFG, ALVS…LPAA, IHLG…GLGM, VAMA…ALVG, and MIGY…IIIF.

This sequence belongs to the major facilitator superfamily. SotB (TC 2.A.1.2) family.

It is found in the cell inner membrane. Involved in the efflux of sugars. The physiological role may be the reduction of the intracellular concentration of toxic sugars or sugar metabolites. This is Probable sugar efflux transporter from Shigella boydii serotype 18 (strain CDC 3083-94 / BS512).